A 505-amino-acid chain; its full sequence is Cholesteryl ester transfer protein (505 aa).

An N-terminal signal peptide occupies residues 1 to 24 (MLWAGGMRLGMARILLMLVHAAAA). N-linked (GlcNAc...) asparagine glycans are attached at residues asparagine 68 and asparagine 114. Cysteine 169 and cysteine 210 form a disulfide bridge. Residues asparagine 266, asparagine 344, and asparagine 422 are each glycosylated (N-linked (GlcNAc...) asparagine).

Belongs to the BPI/LBP/Plunc superfamily. BPI/LBP family. Highly expressed in liver brain, heart, and spleen. Secreted in plasma.

The protein resides in the secreted. It carries out the reaction cholesteryl (9Z-octadecenoate)(in) = cholesteryl (9Z-octadecenoate)(out). The enzyme catalyses 1,2,3-tri-(9Z-octadecenoyl)-glycerol(in) = 1,2,3-tri-(9Z-octadecenoyl)-glycerol(out). It catalyses the reaction cholesteryl (9Z,12Z)-octadecadienoate(in) = cholesteryl (9Z,12Z)-octadecadienoate(out). Involved in the transfer of neutral lipids, including cholesteryl ester and triglyceride, among lipoprotein particles. Allows the net movement of cholesteryl ester from high density lipoproteins/HDL to triglyceride-rich very low density lipoproteins/VLDL, and the equimolar transport of triglyceride from VLDL to HDL. Regulates the reverse cholesterol transport, by which excess cholesterol is removed from peripheral tissues and returned to the liver for elimination. This is Cholesteryl ester transfer protein from Gallus gallus (Chicken).